The following is a 52-amino-acid chain: Stable plasmid inheritance protein (52 aa).

A helical transmembrane segment spans residues serine 6–threonine 26.

This sequence belongs to the Hok/Gef family.

The protein resides in the cell inner membrane. Its function is as follows. Toxic component of a type I toxin-antitoxin (TA) system. Part of the plasmid maintenance system, encodes a toxic protein that collapses the transmembrane potential and arrests respiration. When the adjacent non-translated flmB (sok) gene is disrupted FlmA no longer functions in plasmid maintenance (i.e. FlmB probably encodes an antisense antitoxin RNA). Translation of FlmA may be coupled to the upstream flmC gene. The protein is Stable plasmid inheritance protein (flmA) of Escherichia coli O157:H7.